Here is a 546-residue protein sequence, read N- to C-terminus: Probable sucrose-6-phosphate hydrolase (546 aa).

Residues L105–D108, Q124, F167–S168, R228–D229, and E283 each bind substrate. Residue D108 is part of the active site.

It belongs to the glycosyl hydrolase 32 family.

The protein localises to the cytoplasm. The catalysed reaction is Hydrolysis of terminal non-reducing beta-D-fructofuranoside residues in beta-D-fructofuranosides.. It functions in the pathway glycan biosynthesis; sucrose metabolism. In terms of biological role, enables the bacterium to metabolize sucrose as a sole carbon source. The chain is Probable sucrose-6-phosphate hydrolase from Vibrio cholerae.